A 266-amino-acid chain; its full sequence is Tryptophan synthase alpha chain (266 aa).

Residues E47 and D58 each act as proton acceptor in the active site.

The protein belongs to the TrpA family. In terms of assembly, tetramer of two alpha and two beta chains.

The catalysed reaction is (1S,2R)-1-C-(indol-3-yl)glycerol 3-phosphate + L-serine = D-glyceraldehyde 3-phosphate + L-tryptophan + H2O. Its pathway is amino-acid biosynthesis; L-tryptophan biosynthesis; L-tryptophan from chorismate: step 5/5. Its function is as follows. The alpha subunit is responsible for the aldol cleavage of indoleglycerol phosphate to indole and glyceraldehyde 3-phosphate. The sequence is that of Tryptophan synthase alpha chain from Leptospira biflexa serovar Patoc (strain Patoc 1 / Ames).